Consider the following 801-residue polypeptide: N,N'-diacetylchitobiose phosphorylase (801 aa).

N-acetyl-alpha-D-glucosamine 1-phosphate-binding residues include Arg333, Arg343, Arg349, Asp350, Trp490, and Asp492. Catalysis depends on Asp492, which acts as the Proton donor. N-acetyl-D-glucosamine contacts are provided by Asp492, Lys636, and Glu637. N-acetyl-alpha-D-glucosamine 1-phosphate-binding residues include Glu637, His644, Gln690, Thr709, and Gly710.

Belongs to the glycosyl hydrolase 94 family. Homodimer.

The catalysed reaction is N,N'-diacetylchitobiose + phosphate = N-acetyl-alpha-D-glucosamine 1-phosphate + N-acetyl-D-glucosamine. Functionally, catalyzes the reversible phosphorolysis of chitobiose (N,N'-diacetylchitobiose or (GlcNAc)(2)) into N-acetyl-alpha-D-glucosamine 1-phosphate (GlcNAc-1-P) and N-acetyl-D-glucosamine (GlcNAc) with inversion of the anomeric configuration. In the synthetic reaction, is also active on glucose-1-phosphate with 10% activity as compared with that on GlcNAc-1-P. GlcNAc is the best acceptor substrate, but the enzyme can use aryl-beta-glycosides of GlcNAc as the acceptor substrate with 10-20% activities of GlcNAc. Shows no phosphorolytic activity on cellobiose. The polypeptide is N,N'-diacetylchitobiose phosphorylase (Vibrio proteolyticus (Aeromonas proteolytica)).